Consider the following 467-residue polypeptide: Probable glutamate decarboxylase gamma (467 aa).

Lysine 278 carries the N6-(pyridoxal phosphate)lysine modification.

It belongs to the group II decarboxylase family. Pyridoxal 5'-phosphate serves as cofactor.

The enzyme catalyses L-glutamate + H(+) = 4-aminobutanoate + CO2. This Listeria innocua serovar 6a (strain ATCC BAA-680 / CLIP 11262) protein is Probable glutamate decarboxylase gamma.